Here is a 165-residue protein sequence, read N- to C-terminus: NADPH-dependent 7-cyano-7-deazaguanine reductase (165 aa).

Cys-56 (thioimide intermediate) is an active-site residue. Asp-63 acts as the Proton donor in catalysis. Residues 78 to 80 (VES) and 97 to 98 (HE) each bind substrate.

Belongs to the GTP cyclohydrolase I family. QueF type 1 subfamily.

The protein resides in the cytoplasm. It catalyses the reaction 7-aminomethyl-7-carbaguanine + 2 NADP(+) = 7-cyano-7-deazaguanine + 2 NADPH + 3 H(+). It participates in tRNA modification; tRNA-queuosine biosynthesis. Its function is as follows. Catalyzes the NADPH-dependent reduction of 7-cyano-7-deazaguanine (preQ0) to 7-aminomethyl-7-deazaguanine (preQ1). The sequence is that of NADPH-dependent 7-cyano-7-deazaguanine reductase from Bacillus anthracis (strain A0248).